Consider the following 273-residue polypeptide: NADPH-dependent 7-cyano-7-deazaguanine reductase (273 aa).

81 to 83 is a substrate binding site; the sequence is VES. 83 to 84 lines the NADPH pocket; that stretch reads SK. The active-site Thioimide intermediate is the Cys179. Catalysis depends on Asp186, which acts as the Proton donor. 218–219 provides a ligand contact to substrate; the sequence is AE. Residue 247-248 participates in NADPH binding; the sequence is RG.

It belongs to the GTP cyclohydrolase I family. QueF type 2 subfamily. In terms of assembly, homodimer.

The protein localises to the cytoplasm. The catalysed reaction is 7-aminomethyl-7-carbaguanine + 2 NADP(+) = 7-cyano-7-deazaguanine + 2 NADPH + 3 H(+). It participates in tRNA modification; tRNA-queuosine biosynthesis. Its function is as follows. Catalyzes the NADPH-dependent reduction of 7-cyano-7-deazaguanine (preQ0) to 7-aminomethyl-7-deazaguanine (preQ1). The protein is NADPH-dependent 7-cyano-7-deazaguanine reductase of Rickettsia bellii (strain OSU 85-389).